We begin with the raw amino-acid sequence, 129 residues long: Large ribosomal subunit protein bL20 (129 aa).

It belongs to the bacterial ribosomal protein bL20 family.

Functionally, binds directly to 23S ribosomal RNA and is necessary for the in vitro assembly process of the 50S ribosomal subunit. It is not involved in the protein synthesizing functions of that subunit. This chain is Large ribosomal subunit protein bL20, found in Mycobacteroides abscessus (strain ATCC 19977 / DSM 44196 / CCUG 20993 / CIP 104536 / JCM 13569 / NCTC 13031 / TMC 1543 / L948) (Mycobacterium abscessus).